A 230-amino-acid polypeptide reads, in one-letter code: Ribonuclease 3 (230 aa).

Positions 8–135 (IVELKEKLGI…LIGAVYLQTN (128 aa)) constitute an RNase III domain. Position 48 (Glu-48) interacts with Mg(2+). Asp-52 is an active-site residue. Mg(2+) contacts are provided by Asp-121 and Glu-124. The active site involves Glu-124. The DRBM domain maps to 161–230 (DYKTMIQELV…AHFAFQKLSK (70 aa)).

The protein belongs to the ribonuclease III family. As to quaternary structure, homodimer. Mg(2+) is required as a cofactor.

The protein resides in the cytoplasm. It carries out the reaction Endonucleolytic cleavage to 5'-phosphomonoester.. Functionally, digests double-stranded RNA. Involved in the processing of primary rRNA transcript to yield the immediate precursors to the large and small rRNAs (23S and 16S). Processes some mRNAs, and tRNAs when they are encoded in the rRNA operon. Processes pre-crRNA and tracrRNA of type II CRISPR loci if present in the organism. The polypeptide is Ribonuclease 3 (Natranaerobius thermophilus (strain ATCC BAA-1301 / DSM 18059 / JW/NM-WN-LF)).